The chain runs to 207 residues: Thymidylate kinase (207 aa).

7 to 14 (GCEGTGKT) provides a ligand contact to ATP.

Belongs to the thymidylate kinase family.

It carries out the reaction dTMP + ATP = dTDP + ADP. Its function is as follows. Phosphorylation of dTMP to form dTDP in both de novo and salvage pathways of dTTP synthesis. The sequence is that of Thymidylate kinase from Aster yellows witches'-broom phytoplasma (strain AYWB).